The sequence spans 1374 residues: DNA-directed RNA polymerase subunit beta' (1374 aa).

Zn(2+) contacts are provided by cysteine 71, cysteine 73, cysteine 86, and cysteine 89. 3 residues coordinate Mg(2+): aspartate 462, aspartate 464, and aspartate 466. The Zn(2+) site is built by cysteine 810, cysteine 884, cysteine 891, and cysteine 894.

The protein belongs to the RNA polymerase beta' chain family. As to quaternary structure, the RNAP catalytic core consists of 2 alpha, 1 beta, 1 beta' and 1 omega subunit. When a sigma factor is associated with the core the holoenzyme is formed, which can initiate transcription. The cofactor is Mg(2+). Zn(2+) serves as cofactor.

The catalysed reaction is RNA(n) + a ribonucleoside 5'-triphosphate = RNA(n+1) + diphosphate. Its function is as follows. DNA-dependent RNA polymerase catalyzes the transcription of DNA into RNA using the four ribonucleoside triphosphates as substrates. The chain is DNA-directed RNA polymerase subunit beta' from Rickettsia massiliae (strain Mtu5).